Reading from the N-terminus, the 422-residue chain is Zinc finger protein 550 (422 aa).

The KRAB domain maps to 12 to 83; sequence VTFKDVAVTF…KRGLSHATCA (72 aa). Residues 113–158 form a disordered region; the sequence is LESSTSSDSRLGRARDEEGLLEMQKGKVTPETDLHKETHLGKVSLE. A compositionally biased stretch (basic and acidic residues) spans 122-152; the sequence is RLGRARDEEGLLEMQKGKVTPETDLHKETHL. C2H2-type zinc fingers lie at residues 203 to 225, 231 to 253, 259 to 281, 287 to 309, 315 to 337, 343 to 365, 371 to 393, and 399 to 421; these read YKCK…QRVH, YECN…YLIH, YKCL…HPIH, YECS…NRTH, FECK…YIIH, YDCM…QRIH, YECT…SVIH, and YKCI…QRVH.

It belongs to the krueppel C2H2-type zinc-finger protein family.

Its subcellular location is the nucleus. May be involved in transcriptional regulation. In Homo sapiens (Human), this protein is Zinc finger protein 550 (ZNF550).